The following is a 580-amino-acid chain: Lysine--tRNA ligase (580 aa).

A 'HIGH' region motif is present at residues 43 to 51 (PSGPIHLGN). The disordered stretch occupies residues 178–209 (KAPAKKSQKPLDEAELEAAEGSGAAAEDDGSS). Low complexity predominate over residues 196–209 (AEGSGAAAEDDGSS). The short motif at 325-329 (KMSSS) is the 'KMSKS' region element.

It belongs to the class-I aminoacyl-tRNA synthetase family.

It localises to the cytoplasm. It catalyses the reaction tRNA(Lys) + L-lysine + ATP = L-lysyl-tRNA(Lys) + AMP + diphosphate. This chain is Lysine--tRNA ligase (lysS), found in Streptomyces coelicolor (strain ATCC BAA-471 / A3(2) / M145).